Consider the following 224-residue polypeptide: Extracellular protease inhibitor 10 (224 aa).

An N-terminal signal peptide occupies residues 1-22 (MKSAFTLSLALVAVTATISAAA). Kazal-like domains follow at residues 23–72 (DDNC…ECAS), 90–127 (TSGT…AKCK), and 156–210 (GYQG…PCPS). Residue Asn-25 is glycosylated (N-linked (GlcNAc...) asparagine). Intrachain disulfides connect Cys-26–Cys-56, Cys-30–Cys-49, and Cys-38–Cys-70. The interval 69–92 (ECASTPASSATPSPVTSSTGSTSG) is disordered. A compositionally biased stretch (low complexity) spans 71-92 (ASTPASSATPSPVTSSTGSTSG). Intrachain disulfides connect Cys-96–Cys-126, Cys-100–Cys-119, Cys-162–Cys-193, Cys-167–Cys-186, and Cys-175–Cys-208. An N-linked (GlcNAc...) asparagine glycan is attached at Asn-199. The tract at residues 202-224 (MVGEGPCPSQEQQQQQQQQQQKL) is disordered. Over residues 211-224 (QEQQQQQQQQQQKL) the composition is skewed to low complexity.

Interacts with host subtilisin-like protease P69B.

The protein localises to the secreted. Secreted effector that interacts with and inhibits the pathogenesis-related P69B subtilisin-like serine protease of host tomato. Inhibition of host proteases by a pathogen extracellular protease inhibitor forms a specific type of defense-counterdefense mechanism between plants and microbial pathogens. In Phytophthora infestans (Potato late blight agent), this protein is Extracellular protease inhibitor 10.